A 376-amino-acid chain; its full sequence is 2-hydroxypropyl-CoM lyase (376 aa).

Residues H218, C220, and C341 each coordinate Zn(2+).

This sequence belongs to the vitamin-B12 independent methionine synthase family. As to quaternary structure, homohexamer. Component I of the aliphatic epoxide carboxylation complex together with components II, III and IV. Zn(2+) serves as cofactor.

The enzyme catalyses (R)-2-hydroxypropyl-coenzyme M = (R)-1,2-epoxypropane + coenzyme M. The catalysed reaction is (S)-2-hydroxypropyl-coenzyme M = (S)-1,2-epoxypropane + coenzyme M. Its pathway is alkene metabolism; propylene degradation. Its activity is regulated as follows. Inhibited by methylepoxypropane. Inhibited by the zinc chelator 4-(2-pyridylazo)resorcinol (PAR), in the presence of p- (hydroxymercuri)benzenesulfonic acid (PMPS), and by EDTA. Not inhibited by the coenzyme M analog 2-bromoethanesulfonate (BES). In terms of biological role, involved in aliphatic epoxide carboxylation. Catalyzes the addition of coenzyme M (CoM) to either R- or S-epoxypropane to form the thioether conjugate 2-hydroxypropyl-CoM. Catalyzes the reaction of CoM with R-epoxypropane at a rate approximately twice of that with S-epoxypropane. The CoM analogs 2-mercaptopropionate, 2-mercaptoethanol and cysteine substitute poorly for CoM as the thiol substrate. The polypeptide is 2-hydroxypropyl-CoM lyase (Xanthobacter autotrophicus (strain ATCC BAA-1158 / Py2)).